Here is a 338-residue protein sequence, read N- to C-terminus: Aspartate carbamoyltransferase catalytic subunit (338 aa).

Arg-59 and Thr-60 together coordinate carbamoyl phosphate. Lys-87 serves as a coordination point for L-aspartate. 3 residues coordinate carbamoyl phosphate: Arg-109, His-142, and Gln-145. The L-aspartate site is built by Arg-182 and Arg-253. The carbamoyl phosphate site is built by Gly-294 and Pro-295.

This sequence belongs to the aspartate/ornithine carbamoyltransferase superfamily. ATCase family. In terms of assembly, heterododecamer (2C3:3R2) of six catalytic PyrB chains organized as two trimers (C3), and six regulatory PyrI chains organized as three dimers (R2).

The enzyme catalyses carbamoyl phosphate + L-aspartate = N-carbamoyl-L-aspartate + phosphate + H(+). The protein operates within pyrimidine metabolism; UMP biosynthesis via de novo pathway; (S)-dihydroorotate from bicarbonate: step 2/3. Functionally, catalyzes the condensation of carbamoyl phosphate and aspartate to form carbamoyl aspartate and inorganic phosphate, the committed step in the de novo pyrimidine nucleotide biosynthesis pathway. The protein is Aspartate carbamoyltransferase catalytic subunit of Prochlorococcus marinus (strain MIT 9301).